A 397-amino-acid chain; its full sequence is Cathepsin E-A (397 aa).

The signal sequence occupies residues 1 to 16 (MRQILVLLLFATLVYG). Residues 17–52 (LIRVPLKRQKSIRKTLKEKGKLSHIWTQQGIDMVQY) constitute a propeptide, activation peptide. Positions 74 to 385 (YFGEISVGTP…DRGNNRVGLA (312 aa)) constitute a Peptidase A1 domain. The N-linked (GlcNAc...) asparagine glycan is linked to asparagine 86. Aspartate 92 is an active-site residue. Cysteine 105 and cysteine 110 are joined by a disulfide. N-linked (GlcNAc...) asparagine glycosylation is present at asparagine 130. A disulfide bond links cysteine 268 and cysteine 272. The active site involves aspartate 277. A disulfide bridge links cysteine 310 with cysteine 344.

The protein belongs to the peptidase A1 family. As to quaternary structure, homodimer; disulfide-linked. Post-translationally, glycosylated. Contains high mannose-type oligosaccharide. Expressed predominantly in the larval foregut and the anterior and posterior adult stomach.

Its subcellular location is the endosome. It catalyses the reaction Similar to cathepsin D, but slightly broader specificity.. In terms of biological role, may have a role in immune function. Probably involved in the processing of antigenic peptides during MHC class II-mediated antigen presentation. This Xenopus laevis (African clawed frog) protein is Cathepsin E-A (ctse-a).